We begin with the raw amino-acid sequence, 393 residues long: GDP-4-keto-6-deoxy-D-mannose 3-dehydratase (393 aa).

30 to 33 (NMFT) provides a ligand contact to GDP-4-dehydro-alpha-D-rhamnose. The helical transmembrane segment at 53–73 (YSVMVSSGSTANLLMIAALFF) threads the bilayer. Pyridoxal 5'-phosphate is bound by residues 60-61 (GS), Trp92, Glu166, and Ser187. His192 serves as the catalytic Proton donor/acceptor. His219 contributes to the L-glutamate binding site. Arg223 is a GDP-4-dehydro-alpha-D-rhamnose binding site. Pyridoxal 5'-phosphate is bound at residue Asn252. Arg254 lines the L-glutamate pocket. Glu333 is a GDP-4-dehydro-alpha-D-rhamnose binding site.

The protein belongs to the DegT/DnrJ/EryC1 family. Homodimer. Pyridoxal 5'-phosphate serves as cofactor.

It localises to the cell membrane. It catalyses the reaction GDP-4-dehydro-alpha-D-rhamnose + L-glutamate = GDP-4-dehydro-3,6-dideoxy-alpha-D-mannose + 2-oxoglutarate + NH4(+). It participates in nucleotide-sugar metabolism; GDP-L-colitose biosynthesis. Functionally, involved in the biosynthesis of L-colitose, a 3,6-dideoxyhexose present in the O-antigen region of lipopolysaccharides (LPS), where it serves as an antigenic determinant and is vital for bacterial defense and survival. Catalyzes the removal of the C3'-hydroxyl group from GDP-4-keto-6-deoxy-D-mannose via a combined transamination-deoxygenation reaction. The catalysis is initiated by a transamination step in which pyridoxal 5'-phosphate (PLP) is converted to pyridoxamine 5'-phosphate (PMP) in the presence of L-glutamate. This coenzyme then forms a Schiff base with GDP-4-keto-6-deoxy-D-mannose and the resulting adduct undergoes a PMP-mediated beta-dehydration reaction to give a sugar enamine intermediate, which after tautomerization and hydrolysis to release ammonia yields GDP-4-keto-3,6-dideoxy-D-mannose as a product. This is GDP-4-keto-6-deoxy-D-mannose 3-dehydratase from Yersinia pseudotuberculosis.